A 321-amino-acid chain; its full sequence is Glucan 1,3-beta-glucosidase (321 aa).

A signal peptide spans 1 to 21 (MQFLSSFVFAALALLPLSAMA). Residues Asn39 and Asn99 are each glycosylated (N-linked (GlcNAc...) asparagine). Glu141 (proton donor) is an active-site residue. 3 N-linked (GlcNAc...) asparagine glycosylation sites follow: Asn210, Asn213, and Asn237. The active-site Nucleophile is Glu244. 2 N-linked (GlcNAc...) asparagine glycosylation sites follow: Asn309 and Asn317.

This sequence belongs to the glycosyl hydrolase 17 family.

The protein localises to the secreted. The protein resides in the cell wall. The catalysed reaction is Successive hydrolysis of beta-D-glucose units from the non-reducing ends of (1-&gt;3)-beta-D-glucans, releasing alpha-glucose.. Its function is as follows. Glucanases possibly play a role in cell expansion during growth, in cell-cell fusion during mating, and in spore release during sporulation. This enzyme may be involved in beta-glucan degradation and also function biosynthetically as a transglycosylase. In Schizosaccharomyces pombe (strain 972 / ATCC 24843) (Fission yeast), this protein is Glucan 1,3-beta-glucosidase (bgl2).